A 491-amino-acid chain; its full sequence is Probable diguanylate cyclase CdgI (491 aa).

Residues 1–54 (MIQSTRISMGLFFKYFLSLTKIDPGQNYISLPSIKSSTHIALLFMVSMGTQKLK) lie on the Cytoplasmic side of the membrane. A helical transmembrane segment spans residues 55-75 (AQSFFIFSLLLTLILFCITTL). The Periplasmic segment spans residues 76-89 (YNENTNVKLIPQMN). A helical transmembrane segment spans residues 90-110 (YLMVVVALFFLNAVIFLFMLM). Residues 111 to 121 (KYFTNKQILPT) lie on the Cytoplasmic side of the membrane. Residues 122–142 (LILSLAFLSGLIYLVETIVII) traverse the membrane as a helical segment. Topologically, residues 143–158 (HKPINGSTLIQTKSND) are periplasmic. The chain crosses the membrane as a helical span at residues 159–179 (VSIFYIFRQLSFICLTSLALF). Topologically, residues 180-193 (CYGKDNILDNNKKK) are cytoplasmic. A helical membrane pass occupies residues 194–214 (TGILLLALIPFLVFPLLAHNL). Topologically, residues 215–236 (SSYNADYSLYVVDYCPDNHTAT) are periplasmic. Residues 237 to 257 (WGINYTKILVCLWAFLLFFII) traverse the membrane as a helical segment. The Cytoplasmic segment spans residues 258-265 (MRTRLASE). The helical transmembrane segment at 266 to 286 (LWPLIALLCLASLCCNLLLLT) threads the bilayer. Residues 287–293 (LDEYNYT) lie on the Periplasmic side of the membrane. The helical transmembrane segment at 294 to 314 (IWYISRGIEVSSKLFVVSFLI) threads the bilayer. At 315-491 (YNIFQELQLS…GGNKVIIHHI (177 aa)) the chain is on the cytoplasmic side. The 136-residue stretch at 356–491 (KDFCVMLVDI…GGNKVIIHHI (136 aa)) folds into the GGDEF domain. Residues Asp364 and Ile365 each coordinate Mg(2+). Substrate is bound by residues Asn372, His377, and Asp381. A Mg(2+)-binding site is contributed by Glu407. Glu407 serves as the catalytic Proton acceptor. Substrate is bound at residue Arg427.

As to quaternary structure, homodimer. Mg(2+) serves as cofactor.

The protein localises to the cell inner membrane. It catalyses the reaction 2 GTP = 3',3'-c-di-GMP + 2 diphosphate. It participates in purine metabolism; 3',5'-cyclic di-GMP biosynthesis. Its function is as follows. Catalyzes the synthesis of cyclic-di-GMP (c-di-GMP) via the condensation of 2 GTP molecules. The chain is Probable diguanylate cyclase CdgI from Escherichia coli (strain K12).